Here is a 358-residue protein sequence, read N- to C-terminus: MFDQLDIVEERYEQLNEMLSDPEIVNDSDKLRKYSKEQADLQKTVDVYRDYKSKKEEIAEIDEMLNETEDKEEIEMLKEESASLKSAIPELEEQLKFLLIPKDPNDEKDVIVEIRAAAGGDEAAIFAGDLLRMYSKYAESQNFKTEIVEAAESDHGGYKEISFSVSGSGAYSKLKFENGAHRVQRVPETESGGRIHTSTATVAVLPEVEDVEIEIRNEDLKIDTYRSSGAGGQHVNTTDSAVRITHLPTGVIATSSEKSQIQNREKALKVLKARLYDMKLQEEQQKYAAQRKSAVGTGDRSERVRTYNYPQSRVTDHRIGLTLQKLDQIMEGKLDEIIDALTLSEQTEKLKELNNGEL.

Q233 bears the N5-methylglutamine mark.

It belongs to the prokaryotic/mitochondrial release factor family. Post-translationally, methylated by PrmC. Methylation increases the termination efficiency of RF1.

The protein resides in the cytoplasm. Functionally, peptide chain release factor 1 directs the termination of translation in response to the peptide chain termination codons UAG and UAA. The protein is Peptide chain release factor 1 of Staphylococcus haemolyticus (strain JCSC1435).